The following is a 60-amino-acid chain: uncharacterized protein (60 aa).

The helical transmembrane segment at 11 to 33 (VFTVGFITGGVTPVMVSFVWPAA) threads the bilayer. 2 N-linked (GlcNAc...) asparagine; by host glycosylation sites follow: asparagine 40 and asparagine 57.

It localises to the host membrane. This is an uncharacterized protein from African swine fever virus (strain Badajoz 1971 Vero-adapted) (Ba71V).